A 100-amino-acid chain; its full sequence is Large ribosomal subunit protein uL23 (100 aa).

It belongs to the universal ribosomal protein uL23 family. Part of the 50S ribosomal subunit. Contacts protein L29, and trigger factor when it is bound to the ribosome.

Its function is as follows. One of the early assembly proteins it binds 23S rRNA. One of the proteins that surrounds the polypeptide exit tunnel on the outside of the ribosome. Forms the main docking site for trigger factor binding to the ribosome. The sequence is that of Large ribosomal subunit protein uL23 from Mycobacteroides abscessus (strain ATCC 19977 / DSM 44196 / CCUG 20993 / CIP 104536 / JCM 13569 / NCTC 13031 / TMC 1543 / L948) (Mycobacterium abscessus).